We begin with the raw amino-acid sequence, 383 residues long: Chorismate synthase (383 aa).

2 residues coordinate NADP(+): arginine 39 and arginine 45. FMN-binding positions include arginine 127–serine 129, glutamine 249–serine 250, glycine 294, lysine 309–threonine 313, and arginine 335.

The protein belongs to the chorismate synthase family. Homotetramer. FMNH2 serves as cofactor.

The catalysed reaction is 5-O-(1-carboxyvinyl)-3-phosphoshikimate = chorismate + phosphate. It participates in metabolic intermediate biosynthesis; chorismate biosynthesis; chorismate from D-erythrose 4-phosphate and phosphoenolpyruvate: step 7/7. Catalyzes the anti-1,4-elimination of the C-3 phosphate and the C-6 proR hydrogen from 5-enolpyruvylshikimate-3-phosphate (EPSP) to yield chorismate, which is the branch point compound that serves as the starting substrate for the three terminal pathways of aromatic amino acid biosynthesis. This reaction introduces a second double bond into the aromatic ring system. In Caldicellulosiruptor bescii (strain ATCC BAA-1888 / DSM 6725 / KCTC 15123 / Z-1320) (Anaerocellum thermophilum), this protein is Chorismate synthase.